Consider the following 242-residue polypeptide: MSMLCYTLIIAFLIGIWAAPQSEDNVPLGSPATSDLSDTSCAQTHEDLKTSRNTDQRHPAPKKADDQELGSAANIIVDPKLFQKRQFQSSRVLFSTQPPPLSRDEQSVEFLDNEDALNRNIQAKRQNHPVHDLGEHSVCDSISEWVTKTTATDIKGNTVTVKVDVNLNNHVYKQYFFETKCRNPNPVPSGCRGIDSRLWTSYCTKTQTFVRALTMEGNQASWRFIRIDTACVCVITKKTDNL.

An N-terminal signal peptide occupies residues 1–18; sequence MSMLCYTLIIAFLIGIWA. Positions 19-125 are excised as a propeptide; it reads APQSEDNVPL…ALNRNIQAKR (107 aa). Residues 47 to 66 show a composition bias toward basic and acidic residues; the sequence is DLKTSRNTDQRHPAPKKADD. The disordered stretch occupies residues 47–70; it reads DLKTSRNTDQRHPAPKKADDQELG. Cystine bridges form between Cys-139-Cys-203, Cys-181-Cys-231, and Cys-191-Cys-233.

It belongs to the NGF-beta family. As to quaternary structure, homodimer; non-covalently linked. As to expression, expressed by the venom gland.

The protein localises to the secreted. Its function is as follows. Nerve growth factor is important for the development and maintenance of the sympathetic and sensory nervous systems. It stimulates division and differentiation of sympathetic and embryonic sensory neurons as well as basal forebrain cholinergic neurons in the brain. Its relevance in the snake venom is not clear. However, it has been shown to inhibit metalloproteinase-dependent proteolysis of platelet glycoprotein Ib alpha, suggesting a metalloproteinase inhibition to prevent metalloprotease autodigestion and/or protection against prey proteases. Binds a lipid between the two protein chains in the homodimer. The lipid-bound form promotes histamine relase from mouse mast cells, contrary to the lipid-free form. The polypeptide is Venom nerve growth factor 2 (Pseudechis australis (Mulga snake)).